Here is a 318-residue protein sequence, read N- to C-terminus: 2-keto-3-deoxygluconate permease (318 aa).

Transmembrane regions (helical) follow at residues 10 to 30, 42 to 62, 76 to 96, 105 to 125, 139 to 159, 162 to 182, 199 to 219, 224 to 244, 254 to 274, and 289 to 309; these read IPGG…TFTP, GLIT…GASI, VLVV…GAFL, LLAG…NGGL, AGAF…VILG, GIAT…LIGF, VQTL…LSVI, FAGI…LILA, TAGI…LLIA, and ALVA…TALW.

Belongs to the KdgT transporter family.

The protein localises to the cell inner membrane. The enzyme catalyses 2-dehydro-3-deoxy-D-gluconate(in) + H(+)(in) = 2-dehydro-3-deoxy-D-gluconate(out) + H(+)(out). Its function is as follows. Catalyzes the proton-dependent uptake of 2-keto-3-deoxygluconate (KDG) into the cell. The protein is 2-keto-3-deoxygluconate permease of Pectobacterium atrosepticum (strain SCRI 1043 / ATCC BAA-672) (Erwinia carotovora subsp. atroseptica).